The primary structure comprises 805 residues: FAD-dependent monooxygenase verC1 (805 aa).

An N-terminal signal peptide occupies residues 1 to 20 (MTFRVIIVGGGVAGLTLASA). Residues Glu-32, Ala-46, and Arg-107 each coordinate FAD. N-linked (GlcNAc...) asparagine glycosylation occurs at Asn-132. Tyr-214 is an active-site residue. Positions 306 and 319 each coordinate FAD. Transmembrane regions (helical) follow at residues 551 to 571 (ALTM…AGLG), 604 to 624 (IAVL…AFFW), 632 to 652 (SWLF…YLFS), 671 to 691 (LPVI…FWMW), 703 to 723 (VFFP…VCAI), 726 to 746 (WDML…IWDL), and 761 to 781 (IYGV…LGWL).

This sequence belongs to the paxM FAD-dependent monooxygenase family.

The protein localises to the membrane. Its pathway is secondary metabolite biosynthesis; terpenoid biosynthesis. It participates in mycotoxin biosynthesis. In terms of biological role, FAD-dependent monooxygenase; part of the gene cluster that mediates the biosynthesis of the neurotoxin verrucosidin, a methylated alpha-pyrone polyketide that inhibits oxidative phosphorylation in mitochondria and thereby causes neurological diseases. The carbon backbone of verrucosidin is synthesized by the HR-PKS verA, and further modified by the other verrucodidin cluster enzymes. This Penicillium polonicum protein is FAD-dependent monooxygenase verC1.